A 345-amino-acid polypeptide reads, in one-letter code: S-adenosylmethionine:tRNA ribosyltransferase-isomerase (345 aa).

Belongs to the QueA family. In terms of assembly, monomer.

It localises to the cytoplasm. The catalysed reaction is 7-aminomethyl-7-carbaguanosine(34) in tRNA + S-adenosyl-L-methionine = epoxyqueuosine(34) in tRNA + adenine + L-methionine + 2 H(+). It functions in the pathway tRNA modification; tRNA-queuosine biosynthesis. Transfers and isomerizes the ribose moiety from AdoMet to the 7-aminomethyl group of 7-deazaguanine (preQ1-tRNA) to give epoxyqueuosine (oQ-tRNA). This Helicobacter pylori (strain J99 / ATCC 700824) (Campylobacter pylori J99) protein is S-adenosylmethionine:tRNA ribosyltransferase-isomerase.